A 62-amino-acid polypeptide reads, in one-letter code: Ferredoxin-2 (62 aa).

4Fe-4S ferredoxin-type domains lie at 2–28 and 29–62; these read AHRITDECTYCAACEPECPVSAISAGD and SIYVIDENVCVDCIGYHDEPACVAVCPVDCIIKV. The [4Fe-4S] cluster site is built by C9, C12, C15, C19, C38, C41, C50, and C54.

It depends on [4Fe-4S] cluster as a cofactor.

Functionally, ferredoxins are iron-sulfur proteins that transfer electrons in a wide variety of metabolic reactions. This is Ferredoxin-2 from Chlorobaculum tepidum (strain ATCC 49652 / DSM 12025 / NBRC 103806 / TLS) (Chlorobium tepidum).